The primary structure comprises 74 residues: Antimicrobial peptide HsAp4 (74 aa).

Residues 1-21 form the signal peptide; it reads MSRRRILILVLVTMLVKTMAG. Positions 22–33 are excised as a propeptide; that stretch reads MESKWVETTYEI. Arg65 carries the post-translational modification Arginine amide. The propeptide occupies 69 to 74; it reads AISEQT.

The protein belongs to the non-disulfide-bridged peptide (NDBP) superfamily. Medium-length antimicrobial peptide (group 3) family. In terms of tissue distribution, expressed by the venom gland.

The protein resides in the secreted. The protein localises to the target cell membrane. Functionally, possesses antimicrobial activity against both Gram-negative and Gram-positive bacteria, as well as against the fungus C.tropicalis. Also possesses a relatively high hemolytic activity. May act by disrupting the integrity of the bacterial cell membrane. The protein is Antimicrobial peptide HsAp4 of Heterometrus spinifer (Asia giant forest scorpion).